Consider the following 55-residue polypeptide: Large ribosomal subunit protein bL33 (55 aa).

Belongs to the bacterial ribosomal protein bL33 family.

This Wigglesworthia glossinidia brevipalpis protein is Large ribosomal subunit protein bL33.